The following is a 345-amino-acid chain: Phosphoribosylformylglycinamidine cyclo-ligase (345 aa).

This sequence belongs to the AIR synthase family.

It localises to the cytoplasm. The catalysed reaction is 2-formamido-N(1)-(5-O-phospho-beta-D-ribosyl)acetamidine + ATP = 5-amino-1-(5-phospho-beta-D-ribosyl)imidazole + ADP + phosphate + H(+). The protein operates within purine metabolism; IMP biosynthesis via de novo pathway; 5-amino-1-(5-phospho-D-ribosyl)imidazole from N(2)-formyl-N(1)-(5-phospho-D-ribosyl)glycinamide: step 2/2. In Escherichia coli O7:K1 (strain IAI39 / ExPEC), this protein is Phosphoribosylformylglycinamidine cyclo-ligase.